We begin with the raw amino-acid sequence, 321 residues long: Phospho-N-acetylmuramoyl-pentapeptide-transferase (321 aa).

10 helical membrane passes run 1-21, 50-70, 76-96, 112-132, 140-160, 176-196, 200-220, 225-245, 250-270, and 300-320; these read MLFI…PILI, MGGL…IFFV, IILL…DDYI, FLAQ…FHLV, IPFT…IVFW, GLAT…SFVL, AIGA…PYNL, VFMG…ISIM, LSLL…MLQV, and VVTV…WIGV.

It belongs to the glycosyltransferase 4 family. MraY subfamily. The cofactor is Mg(2+).

It localises to the cell membrane. The enzyme catalyses UDP-N-acetyl-alpha-D-muramoyl-L-alanyl-gamma-D-glutamyl-L-lysyl-D-alanyl-D-alanine + di-trans,octa-cis-undecaprenyl phosphate = Mur2Ac(oyl-L-Ala-gamma-D-Glu-L-Lys-D-Ala-D-Ala)-di-trans,octa-cis-undecaprenyl diphosphate + UMP. Its pathway is cell wall biogenesis; peptidoglycan biosynthesis. In terms of biological role, catalyzes the initial step of the lipid cycle reactions in the biosynthesis of the cell wall peptidoglycan: transfers peptidoglycan precursor phospho-MurNAc-pentapeptide from UDP-MurNAc-pentapeptide onto the lipid carrier undecaprenyl phosphate, yielding undecaprenyl-pyrophosphoryl-MurNAc-pentapeptide, known as lipid I. The protein is Phospho-N-acetylmuramoyl-pentapeptide-transferase of Staphylococcus haemolyticus (strain JCSC1435).